A 355-amino-acid polypeptide reads, in one-letter code: Heat-inducible transcription repressor HrcA (355 aa).

Belongs to the HrcA family.

In terms of biological role, negative regulator of class I heat shock genes (grpE-dnaK-dnaJ and groELS operons). Prevents heat-shock induction of these operons. This Nitratidesulfovibrio vulgaris (strain ATCC 29579 / DSM 644 / CCUG 34227 / NCIMB 8303 / VKM B-1760 / Hildenborough) (Desulfovibrio vulgaris) protein is Heat-inducible transcription repressor HrcA.